Reading from the N-terminus, the 257-residue chain is Protein TONNEAU 1b (257 aa).

The LisH domain occupies 73-105 (SGRLLSALICEYLDWAQLNHTLKVYQPECNSAK). Disordered stretches follow at residues 148–216 (QVMG…EDMP) and 231–257 (LDRK…EGKD). A compositionally biased stretch (low complexity) spans 187 to 199 (SVSASQASGAATS). Composition is skewed to basic and acidic residues over residues 201–212 (YRKDESNWRYDT) and 244–257 (NVKD…EGKD).

In terms of assembly, interacts with CEN1, LNG1/TRM2 and LNG2/TRM1 (via C-terminus).

The protein resides in the cytoplasm. The protein localises to the cytoskeleton. Functionally, involved in the control of the dynamic organization of the cortical cytoskeleton. May play a role in the organization of microtubule arrays at the centrosome through interaction with centrin 1 (CEN1). The polypeptide is Protein TONNEAU 1b (TON1B) (Arabidopsis thaliana (Mouse-ear cress)).